We begin with the raw amino-acid sequence, 265 residues long: Catechol O-methyltransferase (265 aa).

Residues 1 to 2 are Cytoplasmic-facing; that stretch reads ML. The chain crosses the membrane as a helical; Signal-anchor for type II membrane protein span at residues 3–19; sequence LAAVSLGLLLLAFLLLL. The Extracellular segment spans residues 20 to 265; sequence RHLGWGLVAI…QGPGSSPVKS (246 aa). S-adenosyl-L-methionine-binding positions include V85, E107, S115, E133, I134, 160–163, S162, and D184; that span reads GASQ. D184 is a Mg(2+) binding site. K187 contacts substrate. Residues D212 and N213 each coordinate Mg(2+). The substrate site is built by N213 and E242. Residues S260, S261, and S265 each carry the phosphoserine modification.

This sequence belongs to the class I-like SAM-binding methyltransferase superfamily. Cation-dependent O-methyltransferase family. Requires Mg(2+) as cofactor.

The protein localises to the cytoplasm. It is found in the cell membrane. The catalysed reaction is a catechol + S-adenosyl-L-methionine = a guaiacol + S-adenosyl-L-homocysteine + H(+). The enzyme catalyses 2-hydroxyestrone + S-adenosyl-L-methionine = 2-hydroxy-3-methoxy-estrone + S-adenosyl-L-homocysteine + H(+). It carries out the reaction 4-hydroxyestrone + S-adenosyl-L-methionine = 4-methoxyestrone + S-adenosyl-L-homocysteine + H(+). It catalyses the reaction 2-hydroxyestrone + S-adenosyl-L-methionine = 2-methoxyestrone + S-adenosyl-L-homocysteine + H(+). The catalysed reaction is 4-hydroxy-17beta-estradiol + S-adenosyl-L-methionine = 4-methoxy-17beta-estradiol + S-adenosyl-L-homocysteine + H(+). The enzyme catalyses 2-hydroxy-17beta-estradiol + S-adenosyl-L-methionine = 2-hydroxy-3-methoxy-17beta-estradiol + S-adenosyl-L-homocysteine + H(+). It carries out the reaction 2-hydroxy-17beta-estradiol + S-adenosyl-L-methionine = 2-methoxy-17beta-estradiol + S-adenosyl-L-homocysteine + H(+). Functionally, catalyzes the O-methylation, and thereby the inactivation, of catecholamine neurotransmitters and catechol hormones. Also shortens the biological half-lives of certain neuroactive drugs, like L-DOPA, alpha-methyl DOPA and isoproterenol. The chain is Catechol O-methyltransferase from Mus musculus (Mouse).